Consider the following 230-residue polypeptide: Orotidine 5'-phosphate decarboxylase (230 aa).

Residues Asp10, Lys32, 59–68 (DLKYHDIPNT), Thr119, Arg180, Gln189, Gly209, and Arg210 each bind substrate. Catalysis depends on Lys61, which acts as the Proton donor.

It belongs to the OMP decarboxylase family. Type 1 subfamily. As to quaternary structure, homodimer.

It catalyses the reaction orotidine 5'-phosphate + H(+) = UMP + CO2. The protein operates within pyrimidine metabolism; UMP biosynthesis via de novo pathway; UMP from orotate: step 2/2. Its function is as follows. Catalyzes the decarboxylation of orotidine 5'-monophosphate (OMP) to uridine 5'-monophosphate (UMP). This is Orotidine 5'-phosphate decarboxylase from Haemophilus influenzae (strain ATCC 51907 / DSM 11121 / KW20 / Rd).